The following is a 202-amino-acid chain: Large ribosomal subunit protein bL25 (202 aa).

The tract at residues 182–202 (EVEAEETEDDEAASEGEEAAE) is disordered. Residues 183-202 (VEAEETEDDEAASEGEEAAE) are compositionally biased toward acidic residues.

Belongs to the bacterial ribosomal protein bL25 family. CTC subfamily. As to quaternary structure, part of the 50S ribosomal subunit; part of the 5S rRNA/L5/L18/L25 subcomplex. Contacts the 5S rRNA. Binds to the 5S rRNA independently of L5 and L18.

Functionally, this is one of the proteins that binds to the 5S RNA in the ribosome where it forms part of the central protuberance. In Corynebacterium glutamicum (strain R), this protein is Large ribosomal subunit protein bL25.